The primary structure comprises 262 residues: MGPPPAAPAAAAELFGPRLAAAERFTELLATAGVERGLIGPRETDRLWERHVINCGVLAEVVPEGADAVDVGSGAGLPGIPLALARPDVRVVLLEPMERRCRFLQEVVAAVGLEEQVSVLRGRAPDAGIGPEGRRFGVAVARAVAPLERLGAILLPMLQPGGVMLAMRGSRILEELQDARGSLGTQGWHPVDVVVCGEGRVDEPTRVLRAVRSSQLSRAEGRKGRGDGERHDGRQVRRTARDSRRSREVDRDQPTRGQSRST.

Glycine 72, leucine 77, and arginine 142 together coordinate S-adenosyl-L-methionine. The segment at 212 to 262 (RSSQLSRAEGRKGRGDGERHDGRQVRRTARDSRRSREVDRDQPTRGQSRST) is disordered. Residues 219 to 254 (AEGRKGRGDGERHDGRQVRRTARDSRRSREVDRDQP) are compositionally biased toward basic and acidic residues.

The protein belongs to the methyltransferase superfamily. RNA methyltransferase RsmG family.

The protein resides in the cytoplasm. Its function is as follows. Specifically methylates the N7 position of guanine in position 518 of 16S rRNA. In Frankia alni (strain DSM 45986 / CECT 9034 / ACN14a), this protein is Ribosomal RNA small subunit methyltransferase G.